A 473-amino-acid chain; its full sequence is Bifunctional protein HldE (473 aa).

Positions 1–318 are ribokinase; the sequence is MKLSMPRFDQ…RAVQREEGSE (318 aa). 194–197 serves as a coordination point for ATP; that stretch reads NLGE. Residue aspartate 263 is part of the active site. Residues 343–473 are cytidylyltransferase; that stretch reads FTNGCFDILH…TAIVEKIRKA (131 aa).

The protein in the N-terminal section; belongs to the carbohydrate kinase PfkB family. It in the C-terminal section; belongs to the cytidylyltransferase family. Homodimer.

It catalyses the reaction D-glycero-beta-D-manno-heptose 7-phosphate + ATP = D-glycero-beta-D-manno-heptose 1,7-bisphosphate + ADP + H(+). The enzyme catalyses D-glycero-beta-D-manno-heptose 1-phosphate + ATP + H(+) = ADP-D-glycero-beta-D-manno-heptose + diphosphate. The protein operates within nucleotide-sugar biosynthesis; ADP-L-glycero-beta-D-manno-heptose biosynthesis; ADP-L-glycero-beta-D-manno-heptose from D-glycero-beta-D-manno-heptose 7-phosphate: step 1/4. Its pathway is nucleotide-sugar biosynthesis; ADP-L-glycero-beta-D-manno-heptose biosynthesis; ADP-L-glycero-beta-D-manno-heptose from D-glycero-beta-D-manno-heptose 7-phosphate: step 3/4. In terms of biological role, catalyzes the phosphorylation of D-glycero-D-manno-heptose 7-phosphate at the C-1 position to selectively form D-glycero-beta-D-manno-heptose-1,7-bisphosphate. Catalyzes the ADP transfer from ATP to D-glycero-beta-D-manno-heptose 1-phosphate, yielding ADP-D-glycero-beta-D-manno-heptose. In Stutzerimonas stutzeri (strain A1501) (Pseudomonas stutzeri), this protein is Bifunctional protein HldE.